The following is a 279-amino-acid chain: Small ribosomal subunit protein uS2 (279 aa).

Belongs to the universal ribosomal protein uS2 family. Component of the small ribosomal subunit. Mature ribosomes consist of a small (40S) and a large (60S) subunit. The 40S subunit contains about 33 different proteins and 1 molecule of RNA (18S). The 60S subunit contains about 49 different proteins and 3 molecules of RNA (28S, 5.8S and 5S). Interacts with ribosomal protein S21.

Its subcellular location is the cytoplasm. Functionally, required for the assembly and/or stability of the 40S ribosomal subunit. Required for the processing of the 20S rRNA-precursor to mature 18S rRNA in a late step of the maturation of 40S ribosomal subunits. The sequence is that of Small ribosomal subunit protein uS2 from Schistosoma japonicum (Blood fluke).